Reading from the N-terminus, the 101-residue chain is Movement protein (101 aa).

A helical membrane pass occupies residues 30–50 (EVAILSFVALICFYLLYLWVL). Positions 75–101 (VDRSNPIPNLPAPPSQGNPGPFVPGTG) are disordered.

The protein belongs to the mastrevirus movement protein family. As to quaternary structure, interacts with the capsid protein (CP). Part of a MP-CP-viral DNA complex.

Its subcellular location is the host membrane. In terms of biological role, involved in the viral transport within, and between cells. The protein is Movement protein of Maize streak virus genotype A (isolate South Africa) (MSV).